The chain runs to 269 residues: MKGVYHLAKLEWYFEYEIQVNRPGLLGDISSLLGMLSINIVTINGVDLSRRGMLLRCRHIDQIKRLESILKTMETIKVTKLREPRLRDRLAVRHGRYIQRDADDKKTFRFERDELGLLVDFMAELFKKEGHKLIGIRGMPRVGKTESIVASSVCASKRWLFVSSTLLKQTIRSQLIADEYSTENVFIVDGIVSTRRGSERHLQLVREIMRLPATKVVEHPDIFVQNTEYTLDDFDYIIELRNDPDEVITYEHAEEPQMFDQSGFSSFDF.

Residues 14 to 89 (FEYEIQVNRP…KLREPRLRDR (76 aa)) form the ACT domain.

This is an uncharacterized protein from Bacillus subtilis (strain 168).